The chain runs to 255 residues: Myogenic factor 5 (255 aa).

One can recognise a bHLH domain in the interval 83–134 (DRRKAATMRERRRLKKVNQAFETLKRCTTTNPNQRLPKVEILRNAIRYIESL). The tract at residues 226-249 (DTASLSPATSANSQPATPGPSSSR) is disordered.

In terms of assembly, efficient DNA binding requires dimerization with another bHLH protein.

The protein resides in the nucleus. Its function is as follows. Acts as a transcriptional activator that promotes transcription of muscle-specific target genes and plays a role in muscle differentiation. Together with MYOG and MYOD1, co-occupies muscle-specific gene promoter core region during myogenesis. Induces fibroblasts to differentiate into myoblasts. Probable sequence specific DNA-binding protein. This Mus musculus (Mouse) protein is Myogenic factor 5 (Myf5).